The chain runs to 109 residues: A-type ATP synthase subunit F (109 aa).

Belongs to the V-ATPase F subunit family. As to quaternary structure, has multiple subunits with at least A(3), B(3), C, D, E, F, H, I and proteolipid K(x).

The protein localises to the cell membrane. Its function is as follows. Component of the A-type ATP synthase that produces ATP from ADP in the presence of a proton gradient across the membrane. This Haloquadratum walsbyi (strain DSM 16790 / HBSQ001) protein is A-type ATP synthase subunit F.